Consider the following 234-residue polypeptide: Phosphoribosylaminoimidazole-succinocarboxamide synthase (234 aa).

This sequence belongs to the SAICAR synthetase family.

The enzyme catalyses 5-amino-1-(5-phospho-D-ribosyl)imidazole-4-carboxylate + L-aspartate + ATP = (2S)-2-[5-amino-1-(5-phospho-beta-D-ribosyl)imidazole-4-carboxamido]succinate + ADP + phosphate + 2 H(+). It functions in the pathway purine metabolism; IMP biosynthesis via de novo pathway; 5-amino-1-(5-phospho-D-ribosyl)imidazole-4-carboxamide from 5-amino-1-(5-phospho-D-ribosyl)imidazole-4-carboxylate: step 1/2. This chain is Phosphoribosylaminoimidazole-succinocarboxamide synthase, found in Streptococcus agalactiae serotype III (strain NEM316).